A 232-amino-acid chain; its full sequence is Clarin-2 (232 aa).

A helical transmembrane segment spans residues 10-30 (YGLASLLSFSSFILIIVALVV). An N-linked (GlcNAc...) asparagine glycan is attached at asparagine 48. 3 helical membrane passes run 101–121 (ILLLLFLALALALVSMGFAIL), 139–159 (LWNVLAGGVVALAIASFVAAV), and 188–208 (SFWICVASASAHAANLVVVAI).

Belongs to the clarin family.

The protein localises to the cell projection. Its subcellular location is the stereocilium membrane. Plays a key role to hearing function. Required for normal organization and maintenance of the stereocilia bundle and for mechano-electrical transduction. This Homo sapiens (Human) protein is Clarin-2.